The primary structure comprises 417 residues: Gamma-glutamyl phosphate reductase (417 aa).

Belongs to the gamma-glutamyl phosphate reductase family.

The protein resides in the cytoplasm. The catalysed reaction is L-glutamate 5-semialdehyde + phosphate + NADP(+) = L-glutamyl 5-phosphate + NADPH + H(+). The protein operates within amino-acid biosynthesis; L-proline biosynthesis; L-glutamate 5-semialdehyde from L-glutamate: step 2/2. Its function is as follows. Catalyzes the NADPH-dependent reduction of L-glutamate 5-phosphate into L-glutamate 5-semialdehyde and phosphate. The product spontaneously undergoes cyclization to form 1-pyrroline-5-carboxylate. This Legionella pneumophila (strain Paris) protein is Gamma-glutamyl phosphate reductase.